The chain runs to 483 residues: Dual specificity protein phosphatase 10 (483 aa).

The region spanning 169–286 (PSQGPVIIDC…FKQNHGNLCD (118 aa)) is the Rhodanese domain. The interaction with MAP kinases stretch occupies residues 200–216 (KISRRRLQQGKITVLDL). Positions 322–465 (ELTPILPFLF…LLEFEEDLNN (144 aa)) constitute a Tyrosine-protein phosphatase domain. Residue cysteine 409 is the Phosphocysteine intermediate of the active site.

It belongs to the protein-tyrosine phosphatase family. Non-receptor class dual specificity subfamily. In terms of assembly, monomer. Interacts with MAPK14.

It localises to the cytoplasm. It is found in the nucleus. The enzyme catalyses O-phospho-L-tyrosyl-[protein] + H2O = L-tyrosyl-[protein] + phosphate. It carries out the reaction O-phospho-L-seryl-[protein] + H2O = L-seryl-[protein] + phosphate. The catalysed reaction is O-phospho-L-threonyl-[protein] + H2O = L-threonyl-[protein] + phosphate. Its function is as follows. Protein phosphatase involved in the inactivation of MAP kinases. Has a specificity for the MAPK11/MAPK12/MAPK13/MAPK14 subfamily. It preferably dephosphorylates p38. The protein is Dual specificity protein phosphatase 10 (Dusp10) of Mus musculus (Mouse).